A 257-amino-acid chain; its full sequence is Methylthioribulose-1-phosphate dehydratase (257 aa).

A disordered region spans residues 1–33; the sequence is MVSSQEKMASISDIIQKDEDSGSEKTESQDKEH. The segment covering 15 to 33 has biased composition (basic and acidic residues); it reads IQKDEDSGSEKTESQDKEH. Residue Cys-107 participates in substrate binding. Residues His-125 and His-127 each coordinate Zn(2+). Glu-149 serves as the catalytic Proton donor/acceptor. A Zn(2+)-binding site is contributed by His-205.

The protein belongs to the aldolase class II family. MtnB subfamily. Zn(2+) serves as cofactor.

It is found in the cytoplasm. It carries out the reaction 5-(methylsulfanyl)-D-ribulose 1-phosphate = 5-methylsulfanyl-2,3-dioxopentyl phosphate + H2O. It participates in amino-acid biosynthesis; L-methionine biosynthesis via salvage pathway; L-methionine from S-methyl-5-thio-alpha-D-ribose 1-phosphate: step 2/6. Its function is as follows. Catalyzes the dehydration of methylthioribulose-1-phosphate (MTRu-1-P) into 2,3-diketo-5-methylthiopentyl-1-phosphate (DK-MTP-1-P). Functions in the methionine salvage pathway. May play a role in apoptosis. The sequence is that of Methylthioribulose-1-phosphate dehydratase from Esox lucius (Northern pike).